We begin with the raw amino-acid sequence, 190 residues long: Imidazoleglycerol-phosphate dehydratase (190 aa).

It belongs to the imidazoleglycerol-phosphate dehydratase family.

Its subcellular location is the cytoplasm. The enzyme catalyses D-erythro-1-(imidazol-4-yl)glycerol 3-phosphate = 3-(imidazol-4-yl)-2-oxopropyl phosphate + H2O. The protein operates within amino-acid biosynthesis; L-histidine biosynthesis; L-histidine from 5-phospho-alpha-D-ribose 1-diphosphate: step 6/9. In Campylobacter fetus subsp. fetus (strain 82-40), this protein is Imidazoleglycerol-phosphate dehydratase.